Consider the following 307-residue polypeptide: UDP-3-O-acyl-N-acetylglucosamine deacetylase (307 aa).

Zn(2+) contacts are provided by H80, H239, and D243. Residue H266 is the Proton donor of the active site.

It belongs to the LpxC family. Zn(2+) is required as a cofactor.

It carries out the reaction a UDP-3-O-[(3R)-3-hydroxyacyl]-N-acetyl-alpha-D-glucosamine + H2O = a UDP-3-O-[(3R)-3-hydroxyacyl]-alpha-D-glucosamine + acetate. It functions in the pathway glycolipid biosynthesis; lipid IV(A) biosynthesis; lipid IV(A) from (3R)-3-hydroxytetradecanoyl-[acyl-carrier-protein] and UDP-N-acetyl-alpha-D-glucosamine: step 2/6. Its function is as follows. Catalyzes the hydrolysis of UDP-3-O-myristoyl-N-acetylglucosamine to form UDP-3-O-myristoylglucosamine and acetate, the committed step in lipid A biosynthesis. The sequence is that of UDP-3-O-acyl-N-acetylglucosamine deacetylase from Neisseria gonorrhoeae (strain ATCC 700825 / FA 1090).